The following is a 125-amino-acid chain: Large ribosomal subunit protein bL12 (125 aa).

It belongs to the bacterial ribosomal protein bL12 family. As to quaternary structure, homodimer. Part of the ribosomal stalk of the 50S ribosomal subunit. Forms a multimeric L10(L12)X complex, where L10 forms an elongated spine to which 2 to 4 L12 dimers bind in a sequential fashion. Binds GTP-bound translation factors.

Functionally, forms part of the ribosomal stalk which helps the ribosome interact with GTP-bound translation factors. Is thus essential for accurate translation. In Sphingopyxis alaskensis (strain DSM 13593 / LMG 18877 / RB2256) (Sphingomonas alaskensis), this protein is Large ribosomal subunit protein bL12.